The primary structure comprises 249 residues: Ubiquinone biosynthesis O-methyltransferase (249 aa).

S-adenosyl-L-methionine is bound by residues Arg41, Gly72, Asp93, and Met136.

This sequence belongs to the methyltransferase superfamily. UbiG/COQ3 family.

The catalysed reaction is a 3-demethylubiquinol + S-adenosyl-L-methionine = a ubiquinol + S-adenosyl-L-homocysteine + H(+). The enzyme catalyses a 3-(all-trans-polyprenyl)benzene-1,2-diol + S-adenosyl-L-methionine = a 2-methoxy-6-(all-trans-polyprenyl)phenol + S-adenosyl-L-homocysteine + H(+). Its pathway is cofactor biosynthesis; ubiquinone biosynthesis. In terms of biological role, O-methyltransferase that catalyzes the 2 O-methylation steps in the ubiquinone biosynthetic pathway. The polypeptide is Ubiquinone biosynthesis O-methyltransferase (Methylobacterium sp. (strain 4-46)).